The chain runs to 356 residues: Tyrosine recombinase XerS (356 aa).

The region spanning 16-121 (IMPWYVLDYY…ALSSLYKYLT (106 aa)) is the Core-binding (CB) domain. Residues 169–354 (AFLDYVDKEY…VNDEQKNALD (186 aa)) form the Tyr recombinase domain. Catalysis depends on residues arginine 210, lysine 234, histidine 306, arginine 309, and histidine 332. Tyrosine 341 serves as the catalytic O-(3'-phospho-DNA)-tyrosine intermediate.

The protein belongs to the 'phage' integrase family. XerS subfamily.

Its subcellular location is the cytoplasm. Its activity is regulated as follows. FtsK is required for recombination. Functionally, site-specific tyrosine recombinase, which acts by catalyzing the cutting and rejoining of the recombining DNA molecules. Essential to convert dimers of the bacterial chromosome into monomers to permit their segregation at cell division. This is Tyrosine recombinase XerS from Streptococcus equi subsp. zooepidemicus (strain MGCS10565).